The primary structure comprises 512 residues: Ribose import ATP-binding protein RbsA 2 (512 aa).

2 ABC transporter domains span residues 7-242 (LEIR…VGRE) and 257-498 (LGEP…SGIG). Position 39–46 (39–46 (GENGAGKS)) interacts with ATP.

It belongs to the ABC transporter superfamily. Ribose importer (TC 3.A.1.2.1) family. As to quaternary structure, the complex is composed of an ATP-binding protein (RbsA), two transmembrane proteins (RbsC) and a solute-binding protein (RbsB).

It localises to the cell inner membrane. The enzyme catalyses D-ribose(out) + ATP + H2O = D-ribose(in) + ADP + phosphate + H(+). Functionally, part of the ABC transporter complex RbsABC involved in ribose import. Responsible for energy coupling to the transport system. The polypeptide is Ribose import ATP-binding protein RbsA 2 (Rhizobium meliloti (strain 1021) (Ensifer meliloti)).